A 107-amino-acid polypeptide reads, in one-letter code: Integration host factor (107 aa).

The interval 1 to 20 (MALPPLTPEQRAAALEKAAA) is disordered. The span at 9–18 (EQRAAALEKA) shows a compositional bias: low complexity. Residue K54 participates in DNA binding. The H2TH motif, binds DNA signature appears at 64 to 71 (LPGVGKVR). Residues S82, R85, R88, S92, N93, and Q94 each contribute to the DNA site. A lid, binds DNA region spans residues 82–94 (SESRRVRGLGSNQ).

The protein belongs to the actinobacterial IHF (aIHF) family. In terms of assembly, monomer.

The protein resides in the cytoplasm. It localises to the spore. It is found in the nucleoid. Functionally, a nucleoid-associated protein (NAP) that probably plays a role in chromosome compactation. Contributes to development and secondary metabolism, but is dispensable for growth and viability. Binds to the promoter region of a number of genes (including itself); multiple molecules of the protein bind to the DNA simultaneously, deletion alters the expression of about 30 genes (both up- and down-regulation occurs). Plays a role in controlling viability. Binds dsDNA without any obvious sequence specificity, in a concentration and length-dependent manner. Promotes supercoiling in a topoisomerase-dependent manner (counteracts TopA plasmid relaxation). Binds DNA as a monomer, contacting 8 base pairs via the phosphate backbone; each monomer can bind 2 DNA duplexes, allowing a bridging function. Alters DNA topology, constraining negative supercoils, possibly by DNA twist. Longer dsDNA binds more than one sIHF subunit. This is Integration host factor from Streptomyces coelicolor (strain ATCC BAA-471 / A3(2) / M145).